The following is a 219-amino-acid chain: Ribose-5-phosphate isomerase A (219 aa).

Residues 28-31 (SGST), 81-84 (DGAD), and 94-97 (KGGG) contribute to the substrate site. Residue E103 is the Proton acceptor of the active site. K121 lines the substrate pocket.

The protein belongs to the ribose 5-phosphate isomerase family. Homodimer.

It catalyses the reaction aldehydo-D-ribose 5-phosphate = D-ribulose 5-phosphate. It functions in the pathway carbohydrate degradation; pentose phosphate pathway; D-ribose 5-phosphate from D-ribulose 5-phosphate (non-oxidative stage): step 1/1. Functionally, catalyzes the reversible conversion of ribose-5-phosphate to ribulose 5-phosphate. The protein is Ribose-5-phosphate isomerase A of Histophilus somni (strain 2336) (Haemophilus somnus).